The chain runs to 681 residues: MMEKGIWKDALIQSTKKLSPKLQVKNPVMLLVYVGAILATSLYFLGFFGISDEKSGYTLAIALILWFTVLFANFAEAIAEGRGRAQADSLKMARKDVLARKLKHIDDKTDVIEVASNDLKKDDIVYVLANEQIPMDGEVIEGAASVDESAITGESAPVIRESGGDRSAVTGGTTLVSDWLVIRVTAVSGESFLDKMIAMVEGASRKKTPNEIALQILLVTLSIIFLAVSATLLPFTEFASKQAGSGSAISITNVIALLVCLAPTTIGALLSSIGIAGMSRLNQANVLAMSGRAIEAAGDVDVLLLDKTGTITLGNRKASEFIPVDGVTEQELADAAQLSSIADETAEGRSIVVLAKERFDIRGRDFAEMHAEFVPFTATTRMSGIDYQENTIRKGAADAVRTYVTANGGTYPQECDAIVSKVAGAGGTPLVVVRNNKVLGVIYLKDIVKNGVKERFLDLRKMGIKTIMITGDNPMTAAAIAAEAGVDDFLAEATPEAKLELIREYQREGHLVAMTGDGTNDAPALAQADVAVAMNTGTQAAKEAGNMVDLDSSPTKLIDIVRIGKQLLMTRGALTTFSVANDLAKYFAIIPVLFYGIFPQLEALNLMGLTSPTSAILSAIIYNALIIIFLIPLSLKGVKYREMPAGKLLSRNMLIYGLGGLVAPFIAIKLIDMLLTVLGIV.

The next 4 membrane-spanning stretches (helical) occupy residues 30-50, 59-79, 216-236, and 255-275; these read LLVYVGAILATSLYFLGFFGI, LAIALILWFTVLFANFAEAIA, ILLVTLSIIFLAVSATLLPFT, and IALLVCLAPTTIGALLSSIGI. Catalysis depends on aspartate 306, which acts as the 4-aspartylphosphate intermediate. Residues aspartate 343, glutamate 347, 376–383, and lysine 394 each bind ATP; that span reads FTATTRMS. Residues aspartate 517 and aspartate 521 each contribute to the Mg(2+) site. 3 consecutive transmembrane segments (helical) span residues 587–607, 615–635, and 661–681; these read FAIIPVLFYGIFPQLEALNLM, AILSAIIYNALIIIFLIPLSL, and LVAPFIAIKLIDMLLTVLGIV.

The protein belongs to the cation transport ATPase (P-type) (TC 3.A.3) family. Type IA subfamily. In terms of assembly, the system is composed of three essential subunits: KdpA, KdpB and KdpC.

The protein resides in the cell membrane. The catalysed reaction is K(+)(out) + ATP + H2O = K(+)(in) + ADP + phosphate + H(+). Functionally, part of the high-affinity ATP-driven potassium transport (or Kdp) system, which catalyzes the hydrolysis of ATP coupled with the electrogenic transport of potassium into the cytoplasm. This subunit is responsible for energy coupling to the transport system and for the release of the potassium ions to the cytoplasm. This Listeria welshimeri serovar 6b (strain ATCC 35897 / DSM 20650 / CCUG 15529 / CIP 8149 / NCTC 11857 / SLCC 5334 / V8) protein is Potassium-transporting ATPase ATP-binding subunit.